Here is a 435-residue protein sequence, read N- to C-terminus: Glutamyl-tRNA reductase (435 aa).

Residues T49–R52, S109, E114–Q116, and Q120 contribute to the substrate site. C50 (nucleophile) is an active-site residue. Position 189-194 (G189–S194) interacts with NADP(+).

This sequence belongs to the glutamyl-tRNA reductase family. In terms of assembly, homodimer.

The catalysed reaction is (S)-4-amino-5-oxopentanoate + tRNA(Glu) + NADP(+) = L-glutamyl-tRNA(Glu) + NADPH + H(+). It participates in porphyrin-containing compound metabolism; protoporphyrin-IX biosynthesis; 5-aminolevulinate from L-glutamyl-tRNA(Glu): step 1/2. In terms of biological role, catalyzes the NADPH-dependent reduction of glutamyl-tRNA(Glu) to glutamate 1-semialdehyde (GSA). The polypeptide is Glutamyl-tRNA reductase (Listeria monocytogenes serotype 4b (strain CLIP80459)).